The chain runs to 311 residues: Ornithine carbamoyltransferase (311 aa).

Residues 57-60 (STRT), Gln-84, Arg-108, and 135-138 (HPCQ) contribute to the carbamoyl phosphate site. L-ornithine contacts are provided by residues Asn-166, Asp-230, and 234–235 (SM). Carbamoyl phosphate contacts are provided by residues 270–271 (CL) and Arg-298.

This sequence belongs to the aspartate/ornithine carbamoyltransferase superfamily. OTCase family.

It is found in the cytoplasm. It catalyses the reaction carbamoyl phosphate + L-ornithine = L-citrulline + phosphate + H(+). Its pathway is amino-acid biosynthesis; L-arginine biosynthesis; L-arginine from L-ornithine and carbamoyl phosphate: step 1/3. Reversibly catalyzes the transfer of the carbamoyl group from carbamoyl phosphate (CP) to the N(epsilon) atom of ornithine (ORN) to produce L-citrulline. The polypeptide is Ornithine carbamoyltransferase (Carboxydothermus hydrogenoformans (strain ATCC BAA-161 / DSM 6008 / Z-2901)).